The following is a 248-amino-acid chain: MIKERVKMEVIGLEIPLISGNEDYTLAELISTYPLEDKDVIVIAETVVSKIEKNVILKNEITPSNEAMELSKKLGKEPEVVQVILDESNEIVKLGPNFIITETKHGFVCANSGVDESNTSKGIKPLPKNPDKSAEEIRMGIEKITGKKVGVIINDSMGRPFRKGSCGIAIGVSGVCGLWDRKGEKDLFGRELKTTEVGIADELAATASAVMGQSNEGIPLVIIRNAPVPFTNGTGKELIRKKEEDVFR.

Residues 15 to 18, 45 to 46, and Lys-50 each bind GTP; these read IPLI and ET. Asp-115 contacts a divalent metal cation. A GTP-binding site is contributed by Asn-118. Positions 155, 156, and 213 each coordinate a divalent metal cation. 211 to 218 is a binding site for GTP; sequence MGQSNEGI.

This sequence belongs to the CofE family. Homodimer. It depends on Mg(2+) as a cofactor. Mn(2+) is required as a cofactor. The cofactor is K(+).

It catalyses the reaction oxidized coenzyme F420-0 + GTP + L-glutamate = oxidized coenzyme F420-1 + GDP + phosphate + H(+). The catalysed reaction is oxidized coenzyme F420-1 + GTP + L-glutamate = oxidized coenzyme F420-2 + GDP + phosphate + H(+). It participates in cofactor biosynthesis; coenzyme F420 biosynthesis. Functionally, catalyzes the GTP-dependent successive addition of two or more gamma-linked L-glutamates to the L-lactyl phosphodiester of 7,8-didemethyl-8-hydroxy-5-deazariboflavin (F420-0) to form coenzyme F420-0-glutamyl-glutamate (F420-2) or polyglutamated F420 derivatives. This is Coenzyme F420:L-glutamate ligase from Methanococcus maripaludis (strain DSM 14266 / JCM 13030 / NBRC 101832 / S2 / LL).